The primary structure comprises 323 residues: Annexin A3 (323 aa).

Alanine 2 is modified (N-acetylalanine). Annexin repeat units lie at residues 18–89, 90–161, 173–245, and 249–320; these read FSPS…ALVT, APAL…TLAD, HLAK…AIVH, and NTPA…KICG. Residue lysine 177 is modified to N6-acetyllysine. The residue at position 267 (threonine 267) is a Phosphothreonine.

The protein belongs to the annexin family.

Its function is as follows. Inhibitor of phospholipase A2, also possesses anti-coagulant properties. The sequence is that of Annexin A3 (Anxa3) from Mus musculus (Mouse).